A 577-amino-acid polypeptide reads, in one-letter code: MVQSAPASEIAALILRGFDDYREQFREITDGARARFEQAQWQEAQRASAQRINLYEEKVAETVAGLRAGLADSELLDVERWPIIKSAYIAQIDLRLDDELAETWFNSIFCGLFSHDNISDGTMFVHTTRPSLRAHARAPYTRTYRPGGDLRQALEKIFDDYRFDVPYDDRERDLERIDALLHSNLPDWVCKDPDLAIELIGSVFYRNKGAYLVGRLFTPDEQWPLVFPLLHREGHGIQFDTVITDEAEVSIIFSFTRSYFMVDVPVPAELVAFLKRLLPGKHLAELYTSIGFYKQGKSEFYRALINHLATTDDRFVMAPGVRGMVMSVFTLPGFNTVFKIIKDRFNPSKSVDHATVIQKYQLVKNHDRVGRLADTQQFADFRFPVSKFEPECLAELLEVAPSTVVMEGDVVLIRHCWTERRMTPLNIYLENASEAQTREALNDYGLAIKQLAAANIFPGDMLLKNFGVTRHGRVVFYDYDEICYLTEVNFRYIPEPRFPEDEMSSEPWYSVGPNDVFPEEFPRFLFVDLNQRRLFAKLHGNLYDAKYWQGLQEQIREGKVIDVFPYRRQETPEQLLK.

ATP-binding positions include 318-324 (APGVRGM) and Lys-339. Residue Asp-374 is part of the active site.

It belongs to the AceK family.

It localises to the cytoplasm. It carries out the reaction L-seryl-[isocitrate dehydrogenase] + ATP = O-phospho-L-seryl-[isocitrate dehydrogenase] + ADP + H(+). Functionally, bifunctional enzyme which can phosphorylate or dephosphorylate isocitrate dehydrogenase (IDH) on a specific serine residue. This is a regulatory mechanism which enables bacteria to bypass the Krebs cycle via the glyoxylate shunt in response to the source of carbon. When bacteria are grown on glucose, IDH is fully active and unphosphorylated, but when grown on acetate or ethanol, the activity of IDH declines drastically concomitant with its phosphorylation. The chain is Isocitrate dehydrogenase kinase/phosphatase from Pseudomonas aeruginosa (strain LESB58).